The following is a 546-amino-acid chain: MSSATEPVGVPPAEAPDIHTTAGKLADLYRRNHEAVHAGSERAVAKQHAKGKRTARERIDMLLDEGSFVELDEHARHRSTNFGMDADRPYGDGVVTGWGTVDGRRVCVFSQDFTVFGGSLGEVFGEKIVKVMDLAMKTGCPLVGINDSGGARIQEGVAALGLYAEIFKRNTHASGVIPQISLIMGPCAGGAVYSPAITDFTVMVDQTSHMFITGPDVIKTVTGEDVSFEDLGGARTHNERSGNAHYLATDEDDAISYVKELLSFLPSNNLSSSPVFPGAEVEEGSVADGVGDADLELDALVPDSPNQPYDMREVITRLVDEGEFLEVSALFAPNMLCGFGRIEGASVGVVANQPMQLAGTLDIDASEKAARFVRFCDAFNIPVLTLVDVPGFLPGTGQEWNGIIRRGAKLLYAYAEATVPLVTVITRKAYGGAYDVMGSKHLGADINLAWPTAQIAVMGAQGAANILYRRQLAEAAERGEDVEALRARLQQEYEDTLCNPYVAAERGYVDSVIPPSHTRGHVARALRMLADKREALPAKKHGNIPL.

A disordered region spans residues 1-20 (MSSATEPVGVPPAEAPDIHT). The CoA carboxyltransferase N-terminal domain occupies 21–277 (TAGKLADLYR…NNLSSSPVFP (257 aa)). The interval 21–540 (TAGKLADLYR…DKREALPAKK (520 aa)) is carboxyltransferase. The 249-residue stretch at 292–540 (DADLELDALV…DKREALPAKK (249 aa)) folds into the CoA carboxyltransferase C-terminal domain.

It belongs to the AccD/PCCB family. In terms of assembly, probably a dodecamer composed of six biotin-containing alpha subunits and six beta subunits.

The enzyme catalyses propanoyl-CoA + hydrogencarbonate + ATP = (S)-methylmalonyl-CoA + ADP + phosphate + H(+). Its pathway is metabolic intermediate metabolism; propanoyl-CoA degradation; succinyl-CoA from propanoyl-CoA: step 1/3. This is Propionyl-CoA carboxylase beta chain (pccB) from Saccharopolyspora erythraea (strain ATCC 11635 / DSM 40517 / JCM 4748 / NBRC 13426 / NCIMB 8594 / NRRL 2338).